We begin with the raw amino-acid sequence, 283 residues long: MSSNPSSVEKKLLHYTGKAIADFNMIQRGDRVMVCLSGGKDSFTLLTILNQLRIKSGNKFEIFAFTLDQAQPGWNDACLRQWLAEKSIPHEILTRDTYSIVKEKIPEGKTYCSLCSRLRRGIIYRYAEENGFNKIALGHHRDDLIRTLMMSILYNGDIRSMPPKLLSDNKKHIVIRPLCYVQEKDIITFASEQAFPIIPCNLCGSQENLMRKKVASLIDQLAIENPKVPSNMLHALQSLKPSQLMDQNFWNFKNLEDGLETAQSIQCEEVFNAQEFEIEDEKI.

A PP-loop motif motif is present at residues 37–42; the sequence is SGGKDS. Residues C112, C115, and C203 each contribute to the [4Fe-4S] cluster site.

The protein belongs to the TtcA family. In terms of assembly, homodimer. It depends on Mg(2+) as a cofactor. Requires [4Fe-4S] cluster as cofactor.

The protein resides in the cytoplasm. It catalyses the reaction cytidine(32) in tRNA + S-sulfanyl-L-cysteinyl-[cysteine desulfurase] + AH2 + ATP = 2-thiocytidine(32) in tRNA + L-cysteinyl-[cysteine desulfurase] + A + AMP + diphosphate + H(+). It participates in tRNA modification. Catalyzes the ATP-dependent 2-thiolation of cytidine in position 32 of tRNA, to form 2-thiocytidine (s(2)C32). The sulfur atoms are provided by the cysteine/cysteine desulfurase (IscS) system. The sequence is that of tRNA-cytidine(32) 2-sulfurtransferase from Legionella pneumophila (strain Paris).